A 284-amino-acid chain; its full sequence is Tropomyosin (284 aa).

The tract at residues 1–54 (MDAIKKKMQAMKLEKDNAMDRADTLEQQNKEANNRAEKTEEEIRATQKKMQQVE) is disordered. Residues 1–273 (MDAIKKKMQA…KEKYKSITDE (273 aa)) adopt a coiled-coil conformation. Basic and acidic residues predominate over residues 12 to 45 (KLEKDNAMDRADTLEQQNKEANNRAEKTEEEIRA).

It belongs to the tropomyosin family. In terms of assembly, homodimer. In terms of tissue distribution, muscle (at protein level). Expressed in leg and chest protection muscle (at protein level). Expressed in claw muscle.

Tropomyosin, in association with the troponin complex, plays a central role in the calcium dependent regulation of muscle contraction. The sequence is that of Tropomyosin from Eriocheir sinensis (Chinese mitten crab).